We begin with the raw amino-acid sequence, 292 residues long: Succinate dehydrogenase assembly factor 2, mitochondrial (292 aa).

Disordered regions lie at residues 27 to 68 and 266 to 292; these read RSFG…NTTS and TGFHAAKSKKTGGAGLGRMPNVQVFDS. The segment covering 55–68 has biased composition (polar residues); it reads TNRPPNQHVPNTTS.

This sequence belongs to the SDHAF2 family. In terms of assembly, interacts with the flavoprotein subunit within the SDH catalytic dimer.

The protein resides in the mitochondrion matrix. Plays an essential role in the assembly of succinate dehydrogenase (SDH), an enzyme complex (also referred to as respiratory complex II) that is a component of both the tricarboxylic acid (TCA) cycle and the mitochondrial electron transport chain, and which couples the oxidation of succinate to fumarate with the reduction of ubiquinone (coenzyme Q) to ubiquinol. Required for flavinylation (covalent attachment of FAD) of the flavoprotein subunit of the SDH catalytic dimer. In Aspergillus flavus (strain ATCC 200026 / FGSC A1120 / IAM 13836 / NRRL 3357 / JCM 12722 / SRRC 167), this protein is Succinate dehydrogenase assembly factor 2, mitochondrial.